The following is a 480-amino-acid chain: Protein nucleotidyltransferase YdiU (480 aa).

Positions 86, 88, 89, 109, 121, 122, 172, and 179 each coordinate ATP. The Proton acceptor role is filled by aspartate 248. Mg(2+)-binding residues include asparagine 249 and aspartate 258. An ATP-binding site is contributed by aspartate 258.

This sequence belongs to the SELO family. It depends on Mg(2+) as a cofactor. Mn(2+) is required as a cofactor.

The enzyme catalyses L-seryl-[protein] + ATP = 3-O-(5'-adenylyl)-L-seryl-[protein] + diphosphate. The catalysed reaction is L-threonyl-[protein] + ATP = 3-O-(5'-adenylyl)-L-threonyl-[protein] + diphosphate. It catalyses the reaction L-tyrosyl-[protein] + ATP = O-(5'-adenylyl)-L-tyrosyl-[protein] + diphosphate. It carries out the reaction L-histidyl-[protein] + UTP = N(tele)-(5'-uridylyl)-L-histidyl-[protein] + diphosphate. The enzyme catalyses L-seryl-[protein] + UTP = O-(5'-uridylyl)-L-seryl-[protein] + diphosphate. The catalysed reaction is L-tyrosyl-[protein] + UTP = O-(5'-uridylyl)-L-tyrosyl-[protein] + diphosphate. In terms of biological role, nucleotidyltransferase involved in the post-translational modification of proteins. It can catalyze the addition of adenosine monophosphate (AMP) or uridine monophosphate (UMP) to a protein, resulting in modifications known as AMPylation and UMPylation. This chain is Protein nucleotidyltransferase YdiU, found in Salmonella paratyphi A (strain ATCC 9150 / SARB42).